The following is a 940-amino-acid chain: MISAHCNLRLLCSSDSSASASQVAGTTEVVENLVTNDNSPNIPEAIDRLFSDIANINRESMAEITDIQIEEMAVNLWNWALTIGGGWLVNEEQKIRLHYVACKLLSMCEASFASEQSIQRLIMMNMRIGKEWLDAGNFLIADECFQAAVASLEQLYVKLIQRSSPEADLTMEKITVESDHFRVLSYQAESAVAQGDFQRASMCVLQCKDMLMRLPQMTSSLHHLCYNFGVETQKNNKYEESSFWLSQSYDIGKMDKKSTGPEMLAKVLRLLATNYLDWDDTKYYDKALNAVNLANKEHLSSPGLFLKMKILLKGETSNEELLEAVMEILHLDMPLDFCLNIAKLLMDHERESVGFHFLTIIHERFKSSENIGKVLILHTDMLLQRKEELLAKEKIEEIFLAHQTGRQLTAESMNWLHNILWRQAASSFEVQNYTDALQWYYYSLRFYSTDEMDLDFTKLQRNMACCYLNLQQLDKAKEAVAEAERHDPRNVFTQFYIFKIAVIEGNSERALQAIITLENILTDEESEDNDLVAERGSPTMLLSLAAQFALENGQQIVAEKALEYLAQHSEDQEQVLTAVKCLLRFLLPKIAEMPESEDKKKEMDRLLTCLNRAFVKLSQPFGEEALSLESRANEAQWFRKTAWNLAVQCDKDPVMMREFFILSYKMSQFCPSDQVILIARKTCLLMAVAVDLEQGRKASTAFEQTMFLSRALEEIQTCNDIHNFLKQTGTFSNDSCEKLLLLYEFEVRAKLNDPLLESFLESVWELPHLETKTFETIAIIAMEKPAHYPLIALKALKKALLLYKKEEPIDISQYSKCMHNLVNLSVPDGASNVELCPLEEVWGYFEDALSHISRTKDYPEMEILWLMVKSWNTGVLMFSRSKYASAEKWCGLALRFLNHLTSFKESYETQMNMLYSQLVEALSNNKGPVFHEHGYWSKSD.

The protein belongs to the SPO22 family. In terms of assembly, interacts with SYCP2. Interacts with PBXIP1; may prevent interaction between PBXIP1 and ESR2. Interacts with SHOC1. Interacts with REDIC1. As to expression, testis-specific. Not expressed in adult ovaries.

The protein localises to the chromosome. Regulator of crossing-over during meiosis. Involved in initiation and/or maintenance of chromosome synapsis and formation of crossovers. The sequence is that of Testis-expressed protein 11 (TEX11) from Homo sapiens (Human).